Here is a 102-residue protein sequence, read N- to C-terminus: Co-chaperonin GroES (102 aa).

Belongs to the GroES chaperonin family. In terms of assembly, heptamer of 7 subunits arranged in a ring. Interacts with the chaperonin GroEL.

The protein localises to the cytoplasm. In terms of biological role, together with the chaperonin GroEL, plays an essential role in assisting protein folding. The GroEL-GroES system forms a nano-cage that allows encapsulation of the non-native substrate proteins and provides a physical environment optimized to promote and accelerate protein folding. GroES binds to the apical surface of the GroEL ring, thereby capping the opening of the GroEL channel. This is Co-chaperonin GroES from Chlamydia muridarum (strain MoPn / Nigg).